Consider the following 839-residue polypeptide: MNHLEGSAEVEVADEAPGGEVNESVEADLEHPEVEEEQQPSPPPPAGHAPEDHRAHPAPPPPPPPQEEEEERGECLARSASTESGFHNHTDTAEGDVLAAARDGYEAERAQDADDESAYAVQYRPEAEEYTEQAEAEHAEAAQRRALPNHLHFHSLEHEEAMNAAYSGYVYTHRLFHRAEDEPYAEPYADYGGLQEHVYEEIGDAPELEARDGLRLYERERDEAAAYRQEALGARLHHYDERSDGESDSPEKEAEFAPYPRMDSYEQEEDIDQIVAEVKQSMSSQSLDKAAEDMPEAEQDLERAPTPGGGHPDSPGLPAPAGQQQRVVGTPGGSEVGQRYSKEKRDAISLAIKDIKEAIEEVKTRTIRSPYTPDEPKEPIWVMRQDISPTRDCDDQRPVDGDSPSPGSSSPLGAESSITPLHPGDPTEASTNKESRKSLASFPTYVEVPGPCDPEDLIDGIIFAANYLGSTQLLSDKTPSKNVRMMQAQEAVSRIKTAQKLAKSRKKAPEGESQPMTEVDLFISTQRIKVLNADTQEPMMDHPLRTISYIADIGNIVVLMARRRMPRSNSQENVEASHPSQDAKRQYKMICHVFESEDAQLIAQSIGQAFSVAYQEFLRANGINPEDLSQKEYSDLLNTQDMYNDDLIHFSKSENCKDVFIEKQKGEILGVVIVESGWGSILPTVIIANMMHGGPAEKSGKLNIGDQIMSINGTSLVGLPLSTCQSIIKGLKNQSRVKLNIVRCPPVTTVLIRRPDLRYQLGFSVQNGIICSLMRGGIAERGGVRVGHRIIEINGQSVVATPHEKIVHILSNAVGEIHMKTMPAAMYRLLTAQEQPVYI.

Disordered stretches follow at residues 1-118 (MNHL…DESA), 235-346 (RLHH…EKRD), and 362-437 (VKTR…ESRK). Positions 23–38 (ESVEADLEHPEVEEEQ) are enriched in acidic residues. Ser79 is subject to Phosphoserine. Basic and acidic residues-rich tracts occupy residues 103-112 (DGYEAERAQD) and 237-255 (HHYD…KEAE). The interval 227–315 (YRQEALGARL…TPGGGHPDSP (89 aa)) is munc-18-1 binding. Residues Ser243, Ser247, Ser249, Ser264, Ser281, and Ser286 each carry the phosphoserine modification. Thr306 carries the phosphothreonine modification. A phosphoserine mark is found at Ser314 and Ser369. Position 372 is a phosphothreonine (Thr372). Positions 375–438 (EPKEPIWVMR…ASTNKESRKS (64 aa)) are LIN-2/CASK binding. Residues 389 to 400 (PTRDCDDQRPVD) show a composition bias toward basic and acidic residues. Positions 401–417 (GDSPSPGSSSPLGAESS) are enriched in low complexity. 4 positions are modified to phosphoserine: Ser403, Ser405, Ser410, and Ser570. Positions 459-645 (DGIIFAANYL…LLNTQDMYND (187 aa)) constitute a PID domain. The segment at 628 to 643 (LSQKEYSDLLNTQDMY) is autoinhibitory helix linker. PDZ domains lie at 658-744 (DVFI…IVRC) and 749-824 (TVLI…TMPA).

As to quaternary structure, part of a multimeric complex containing STXBP1 and STX1A. Interacts with STXBP1. Component of the brain-specific heterotrimeric complex (LIN-10-LIN-2-LIN-7 complex) composed of at least APBA1, CASK, and LIN7, which associates with the motor protein KIF17 to transport vesicles along microtubules. Within the complex, interacts (via PDZ domain) with the motor protein KIF17; the interaction is direct and is required for association of KIF17 with the cargo that is to be transported. Binds to the cytoplasmic domain of amyloid protein (APP). Interacts (via PDZ 1 and 2 domains) with FSPB. Isoform 2 interacts (via its truncated PID domain) with active, GTP-bound RAB6A and RAB6B. Brain. Detected in the cerebellum, hippocampus, olfactory system, piriform and entorhinal cortex, supraoptic nucleus of the hypothalamus, substantia nigra, and other mesencephalic areas.

It is found in the cytoplasm. Its subcellular location is the perinuclear region. It localises to the nucleus. The protein localises to the golgi apparatus. Functionally, putative function in synaptic vesicle exocytosis by binding to Munc18-1, an essential component of the synaptic vesicle exocytotic machinery. May modulate processing of the amyloid-beta precursor protein (APP) and hence formation of APP-beta. The polypeptide is Amyloid-beta A4 precursor protein-binding family A member 1 (Apba1) (Rattus norvegicus (Rat)).